We begin with the raw amino-acid sequence, 420 residues long: Probable endo-beta-1,4-glucanase celB (420 aa).

Residues 1-18 (MLRKLTPLALALLPLVAG) form the signal peptide. Residue asparagine 118 is glycosylated (N-linked (GlcNAc...) asparagine). Glutamate 215 functions as the Nucleophile in the catalytic mechanism. The active-site Proton donor is glutamate 220. N-linked (GlcNAc...) asparagine glycans are attached at residues asparagine 234, asparagine 293, and asparagine 383.

This sequence belongs to the glycosyl hydrolase 7 (cellulase C) family.

It localises to the secreted. It carries out the reaction Endohydrolysis of (1-&gt;4)-beta-D-glucosidic linkages in cellulose, lichenin and cereal beta-D-glucans.. Its function is as follows. Has endoglucanase activity on substrates containing beta-1,4 glycosidic bonds, like in carboxymethylcellulose (CMC), hydroxyethylcellulose (HEC) and beta-glucan. Involved in the degradation of complex natural cellulosic substrates. The polypeptide is Probable endo-beta-1,4-glucanase celB (celB) (Aspergillus terreus (strain NIH 2624 / FGSC A1156)).